The sequence spans 75 residues: Conotoxin Vt15.1 (75 aa).

The N-terminal stretch at 1–19 (MMPVILPLLLSLAIRGGDG) is a signal peptide. A propeptide spanning residues 20–43 (QAIQGDRDLIAKLFKRYQEHGLSV) is cleaved from the precursor. Trp73 is subject to Tryptophan amide.

Belongs to the conotoxin V superfamily. Contains 4 disulfide bonds. Expressed by the venom duct.

It is found in the secreted. This Conus planorbis (Planorbis cone) protein is Conotoxin Vt15.1.